The following is a 463-amino-acid chain: Argininosuccinate lyase (463 aa).

This sequence belongs to the lyase 1 family. Argininosuccinate lyase subfamily.

The protein localises to the cytoplasm. The enzyme catalyses 2-(N(omega)-L-arginino)succinate = fumarate + L-arginine. The protein operates within amino-acid biosynthesis; L-arginine biosynthesis; L-arginine from L-ornithine and carbamoyl phosphate: step 3/3. The chain is Argininosuccinate lyase from Thiobacillus denitrificans (strain ATCC 25259 / T1).